Here is a 310-residue protein sequence, read N- to C-terminus: 4-hydroxyproline 2-epimerase (310 aa).

Cys-88 acts as the Proton acceptor in catalysis. Substrate is bound by residues 89-90 (GH), His-208, and Asp-232. Cys-236 (proton donor) is an active-site residue. 237–238 (GT) contributes to the substrate binding site.

This sequence belongs to the proline racemase family.

It catalyses the reaction trans-4-hydroxy-L-proline = cis-4-hydroxy-D-proline. Functionally, catalyzes the epimerization of trans-4-hydroxy-L-proline (t4LHyp) to cis-4-hydroxy-D-proline (c4DHyp). Is likely involved in a degradation pathway that converts t4LHyp to alpha-ketoglutarate. Displays no proline racemase activity. The protein is 4-hydroxyproline 2-epimerase of Pseudomonas fluorescens (strain ATCC BAA-477 / NRRL B-23932 / Pf-5).